A 203-amino-acid polypeptide reads, in one-letter code: Phospho-2-dehydro-3-deoxyheptonate aldolase (203 aa).

The span at 1–10 shows a compositional bias: basic and acidic residues; the sequence is MIDRLVRDSR. Positions 1–28 are disordered; that stretch reads MIDRLVRDSRGPVTERNPPHMSLSAGPA.

It belongs to the class-I DAHP synthase family.

The catalysed reaction is D-erythrose 4-phosphate + phosphoenolpyruvate + H2O = 7-phospho-2-dehydro-3-deoxy-D-arabino-heptonate + phosphate. The protein operates within metabolic intermediate biosynthesis; chorismate biosynthesis; chorismate from D-erythrose 4-phosphate and phosphoenolpyruvate: step 1/7. Functionally, stereospecific condensation of phosphoenolpyruvate (PEP) and D-erythrose-4-phosphate (E4P) giving rise to 3-deoxy-D-arabino-heptulosonate-7-phosphate (DAHP). The protein is Phospho-2-dehydro-3-deoxyheptonate aldolase (aroA) of Amycolatopsis methanolica.